A 111-amino-acid polypeptide reads, in one-letter code: Ig kappa chain V-III region CBPC 101 (111 aa).

Residues 1-23 (DIVLTQSPASLAVSLGQRATISC) are framework-1. Cysteine 23 and cysteine 92 are joined by a disulfide. The complementarity-determining-1 stretch occupies residues 24-38 (KASQSVDYTGESYMN). The interval 39–53 (WYQQNPGQSPKLLIY) is framework-2. A complementarity-determining-2 region spans residues 54-60 (AASNLES). Residues 61 to 92 (GIPARFSGSGSGTDFTLNIHPVEEEDAATYYC) are framework-3. A complementarity-determining-3 region spans residues 93–101 (QQSNEDPYT). The framework-4 stretch occupies residues 102–111 (FGGGTKLEIK).

The polypeptide is Ig kappa chain V-III region CBPC 101 (Mus musculus (Mouse)).